Consider the following 427-residue polypeptide: Protein phosphatase methylesterase 1 (427 aa).

A disordered region spans residues 1–49; that stretch reads MSELQKSFAKAKLAKLPPEAPPFSMHPPRDEDDSESASSTGTVVPSPSR. The span at 36–49 shows a compositional bias: polar residues; that stretch reads SASSTGTVVPSPSR. Catalysis depends on residues Ser207, Asp233, and His364. Residues 402-427 form a disordered region; that stretch reads SAAMKQGAEAGAVPPFGRGQGSSHKP.

This sequence belongs to the AB hydrolase superfamily.

The enzyme catalyses [phosphatase 2A protein]-C-terminal L-leucine methyl ester + H2O = [phosphatase 2A protein]-C-terminal L-leucine + methanol + H(+). In terms of biological role, demethylates proteins that have been reversibly carboxymethylated. Demethylates the phosphatase PP2A catalytic subunit. The sequence is that of Protein phosphatase methylesterase 1 (ppe1) from Aspergillus oryzae (strain ATCC 42149 / RIB 40) (Yellow koji mold).